The chain runs to 179 residues: Large ribosomal subunit protein uL6 (179 aa).

It belongs to the universal ribosomal protein uL6 family. In terms of assembly, part of the 50S ribosomal subunit.

Functionally, this protein binds to the 23S rRNA, and is important in its secondary structure. It is located near the subunit interface in the base of the L7/L12 stalk, and near the tRNA binding site of the peptidyltransferase center. This is Large ribosomal subunit protein uL6 from Chlorobium chlorochromatii (strain CaD3).